The following is a 790-amino-acid chain: Potassium transporter 22 (790 aa).

The Cytoplasmic segment spans residues 1–64; the sequence is MAQQQGQGAG…HGEGWARTLR (64 aa). A helical membrane pass occupies residues 65-85; sequence LAFQCFGVLYGDIGTSPLYVY. Residues 86–98 are Extracellular-facing; that stretch reads STTFDGGIRHTDD. Residues 99–119 traverse the membrane as a helical segment; that stretch reads LLGVLSLIIYSFLLFTIIKYV. Residues 120–198 lie on the Cytoplasmic side of the membrane; that stretch reads YIALRANDDG…DLLENSRPVR (79 aa). The chain crosses the membrane as a helical span at residues 199–219; sequence ISLFLLTILATAMVISDACLT. Topologically, residues 220 to 236 are extracellular; that stretch reads PAISVLSAVGGLKDKAP. A helical membrane pass occupies residues 237–257; sequence HLNTEQVVWVTVGILVMLFAV. Over 258-264 the chain is Cytoplasmic; that stretch reads QRFGTDK. The chain crosses the membrane as a helical span at residues 265-285; the sequence is VGYLFAPVVLLWLLLIGGVGV. The Extracellular portion of the chain corresponds to 286-318; it reads YNLAAHDVGVLRAFNPKYILDYFRRNGRHGWVS. A helical membrane pass occupies residues 319–339; the sequence is LGGVLLCFTGTEALFADLGCF. Residues 340–345 lie on the Cytoplasmic side of the membrane; it reads SIRSIQ. A helical transmembrane segment spans residues 346 to 366; that stretch reads LSFAFGLVPAVLLAYAGQAAY. Residues 367 to 385 lie on the Extracellular side of the membrane; that stretch reads LRVYPDHVGDAFYASTPQV. The helical transmembrane segment at 386–406 threads the bilayer; it reads LFWPTLVLALAASVVGSQAMI. Residues 407–437 lie on the Cytoplasmic side of the membrane; that stretch reads SCAFATISHSQAMGCFPRVKVVHTSRQYQGQ. Residues 438 to 458 form a helical membrane-spanning segment; sequence VYIPEINLLLGAAACVVTVAA. The Extracellular segment spans residues 459–469; sequence RDTVVIGEAHG. A helical transmembrane segment spans residues 470 to 490; sequence ICVVLVMLITTLLLTVVMVLV. The Cytoplasmic segment spans residues 491 to 492; it reads WR. The chain crosses the membrane as a helical span at residues 493-513; it reads VNIGWVLVFACVFASTESVYL. The Extracellular portion of the chain corresponds to 514–519; sequence TSVLYK. A helical transmembrane segment spans residues 520–540; the sequence is FAHGGYIPVAMSAVLMGVMGV. The Cytoplasmic portion of the chain corresponds to 541–790; that stretch reads WHYVHVRRYK…LLKVGMSYEI (250 aa).

Belongs to the HAK/KUP transporter (TC 2.A.72.3) family.

It is found in the membrane. In terms of biological role, high-affinity potassium transporter. The sequence is that of Potassium transporter 22 (HAK22) from Oryza sativa subsp. japonica (Rice).